Consider the following 274-residue polypeptide: Thymidylate synthase (274 aa).

Residue Arg21 participates in dUMP binding. His51 serves as a coordination point for (6R)-5,10-methylene-5,6,7,8-tetrahydrofolate. 123–124 (RR) lines the dUMP pocket. Cys156 functions as the Nucleophile in the catalytic mechanism. DUMP-binding positions include 176 to 179 (RSAD), Asn187, and 217 to 219 (HIY). Asp179 contributes to the (6R)-5,10-methylene-5,6,7,8-tetrahydrofolate binding site. Ser273 lines the (6R)-5,10-methylene-5,6,7,8-tetrahydrofolate pocket.

It belongs to the thymidylate synthase family. Bacterial-type ThyA subfamily. Homodimer.

It localises to the cytoplasm. It carries out the reaction dUMP + (6R)-5,10-methylene-5,6,7,8-tetrahydrofolate = 7,8-dihydrofolate + dTMP. It participates in pyrimidine metabolism; dTTP biosynthesis. Functionally, catalyzes the reductive methylation of 2'-deoxyuridine-5'-monophosphate (dUMP) to 2'-deoxythymidine-5'-monophosphate (dTMP) while utilizing 5,10-methylenetetrahydrofolate (mTHF) as the methyl donor and reductant in the reaction, yielding dihydrofolate (DHF) as a by-product. This enzymatic reaction provides an intracellular de novo source of dTMP, an essential precursor for DNA biosynthesis. The chain is Thymidylate synthase from Francisella philomiragia subsp. philomiragia (strain ATCC 25017 / CCUG 19701 / FSC 153 / O#319-036).